The chain runs to 387 residues: Phosphoglycerate kinase (387 aa).

Residues 21-23, Arg-36, 59-62, Arg-113, and Arg-146 contribute to the substrate site; these read DLN and HLGR. Residues Lys-197, Glu-314, and 340-343 contribute to the ATP site; that span reads GGDT.

The protein belongs to the phosphoglycerate kinase family. As to quaternary structure, monomer.

The protein localises to the cytoplasm. It catalyses the reaction (2R)-3-phosphoglycerate + ATP = (2R)-3-phospho-glyceroyl phosphate + ADP. It participates in carbohydrate degradation; glycolysis; pyruvate from D-glyceraldehyde 3-phosphate: step 2/5. The polypeptide is Phosphoglycerate kinase (Aliivibrio salmonicida (strain LFI1238) (Vibrio salmonicida (strain LFI1238))).